The primary structure comprises 1028 residues: Sporulation-specific protein 3 (1028 aa).

It is found in the prospore membrane. In terms of biological role, has a role in spore morphogenesis. Involved in the assembly of the forespore membrane. The protein is Sporulation-specific protein 3 (spo3) of Schizosaccharomyces pombe (strain 972 / ATCC 24843) (Fission yeast).